Consider the following 163-residue polypeptide: Protein-export protein SecB (163 aa).

This sequence belongs to the SecB family. As to quaternary structure, homotetramer, a dimer of dimers. One homotetramer interacts with 1 SecA dimer.

It localises to the cytoplasm. Its function is as follows. One of the proteins required for the normal export of preproteins out of the cell cytoplasm. It is a molecular chaperone that binds to a subset of precursor proteins, maintaining them in a translocation-competent state. It also specifically binds to its receptor SecA. This Brucella canis (strain ATCC 23365 / NCTC 10854 / RM-666) protein is Protein-export protein SecB.